A 516-amino-acid polypeptide reads, in one-letter code: Homeobox protein 6 (516 aa).

Residues 22 to 31 are compositionally biased toward low complexity; sequence NYDFDNKNNS. Disordered stretches follow at residues 22–140, 200–256, and 268–348; these read NYDF…PNCN, SLNN…SSPS, and DEND…NNGD. Over residues 32-41 the composition is skewed to gly residues; it reads IGGGGGGGGS. Low complexity-rich tracts occupy residues 42–59, 66–78, and 101–132; these read SSSR…SSSG, SNSS…IINS, and TTTT…NSSS. Residues 284–346 show a composition bias toward low complexity; the sequence is NNNNNNNNNN…NNNNTNTNNN (63 aa). DNA-binding regions (homeobox) lie at residues 362 to 421 and 424 to 483; these read KSGQ…SKSG and SYAK…NKLS. Residues 483–516 form a disordered region; it reads SSKAIQDKDNQDNDNNNSNNNENNDDSYSDEGLF. Over residues 495–504 the composition is skewed to low complexity; sequence NDNNNSNNNE. A compositionally biased stretch (acidic residues) spans 505-516; it reads NNDDSYSDEGLF.

It localises to the nucleus. Functionally, putative transcription factor. The polypeptide is Homeobox protein 6 (hbx6) (Dictyostelium discoideum (Social amoeba)).